Consider the following 281-residue polypeptide: Probable short-chain type dehydrogenase/reductase blr2146 (281 aa).

10–34 (VVTGAGAGIGKACALAIAREGGRVV) provides a ligand contact to NAD(+). S146 contributes to the substrate binding site. Catalysis depends on Y159, which acts as the Proton acceptor. Positions 261–281 (GNSRAARPAGETAEADAAPRC) are disordered.

Belongs to the short-chain dehydrogenases/reductases (SDR) family.

This is Probable short-chain type dehydrogenase/reductase blr2146 from Bradyrhizobium diazoefficiens (strain JCM 10833 / BCRC 13528 / IAM 13628 / NBRC 14792 / USDA 110).